The chain runs to 169 residues: Ribosome maturation factor RimP (169 aa).

Belongs to the RimP family.

The protein resides in the cytoplasm. In terms of biological role, required for maturation of 30S ribosomal subunits. This chain is Ribosome maturation factor RimP, found in Streptomyces avermitilis (strain ATCC 31267 / DSM 46492 / JCM 5070 / NBRC 14893 / NCIMB 12804 / NRRL 8165 / MA-4680).